We begin with the raw amino-acid sequence, 210 residues long: Small ribosomal subunit protein uS3 (210 aa).

A KH type-2 domain is found at 17 to 86 (IDEFLEKELR…NPQIEVEEIK (70 aa)).

It belongs to the universal ribosomal protein uS3 family. As to quaternary structure, part of the 30S ribosomal subunit.

Functionally, binds the lower part of the 30S subunit head. The chain is Small ribosomal subunit protein uS3 from Pyrococcus furiosus (strain ATCC 43587 / DSM 3638 / JCM 8422 / Vc1).